Consider the following 413-residue polypeptide: MHSLLRPSRFSANQSVLCLLQRHRVFFSSISVKPRKRMVYCVVSYRGTGFAGLQYNANVKTIQDTLFQAFARVGAVVQVNADSPKKIRMCSAARTDKGVHAIVNVLGLKVLDNQPLPHVVNLVNDILPPCIRVWKMARTFNSFSPHTVCDSRVYEYWLPVSSLLTPRPCTLEAYVIAKASEKAFPINETLSHLANLSKQDCVANSLSEPFRLSKPKLDFLKHACTMFRGTHRFHSYTTEKGFSDASSRRFLLDVRVDNLHIDKLNRQWVKLIFHGQSFMKHQIRKMVGILIHLTRTGWNAQVLLNTFNNSYRIRIPRAPAEFLLLNQPIFQAFNKKCSRFDHEPVEWSCAQKGIDQFAHSFLRTPMFDCFISSESFQSFFILQKQFQLFQDLALLTSFDFLEPSSRRDILGEK.

The active-site Nucleophile is the Asp-96. Tyr-154 lines the substrate pocket.

It belongs to the tRNA pseudouridine synthase TruA family.

The protein localises to the cytoplasm. The protein resides in the nucleus. It carries out the reaction a uridine in tRNA = a pseudouridine in tRNA. In Schizosaccharomyces pombe (strain 972 / ATCC 24843) (Fission yeast), this protein is Putative tRNA pseudouridine synthase C16C4.06c.